We begin with the raw amino-acid sequence, 427 residues long: Trigger factor (427 aa).

Positions 163–248 (GDTVVIDFVG…VNEVKAKELP (86 aa)) constitute a PPIase FKBP-type domain.

It belongs to the FKBP-type PPIase family. Tig subfamily.

It localises to the cytoplasm. The catalysed reaction is [protein]-peptidylproline (omega=180) = [protein]-peptidylproline (omega=0). Functionally, involved in protein export. Acts as a chaperone by maintaining the newly synthesized protein in an open conformation. Functions as a peptidyl-prolyl cis-trans isomerase. The sequence is that of Trigger factor from Lactococcus lactis subsp. cremoris (strain MG1363).